Here is a 470-residue protein sequence, read N- to C-terminus: 3-isopropylmalate dehydratase large subunit (470 aa).

Residues C351, C411, and C414 each coordinate [4Fe-4S] cluster.

It belongs to the aconitase/IPM isomerase family. LeuC type 1 subfamily. In terms of assembly, heterodimer of LeuC and LeuD. [4Fe-4S] cluster serves as cofactor.

It catalyses the reaction (2R,3S)-3-isopropylmalate = (2S)-2-isopropylmalate. It participates in amino-acid biosynthesis; L-leucine biosynthesis; L-leucine from 3-methyl-2-oxobutanoate: step 2/4. In terms of biological role, catalyzes the isomerization between 2-isopropylmalate and 3-isopropylmalate, via the formation of 2-isopropylmaleate. The sequence is that of 3-isopropylmalate dehydratase large subunit from Shewanella frigidimarina (strain NCIMB 400).